A 236-amino-acid chain; its full sequence is MASLPVQFTRNQISSPFFSVNLRREPRSLVTVHCSAGENRENGEGVKKSLFPLKELGSIACAALCACTLTIASPVIAANQRLPPLSTEPDRCEKAFVGNTIGQANGVYDKPLDLRFCDYTNDQTNLKGKTLSAALMVGAKFDGADMTEVVMSKAYAVEASFKGVNFTNAVIDRVNFGKSNLKGAVFRNTVLSGSTFEEANLEDVVFEDTIIGYIDLQKICRNESINEEGRLVLGCR.

Pentapeptide repeat domains are found at residues 124–163 (TNLK…SFKG) and 169–208 (AVID…VFED).

Interacts in vitro with LTO1.

The protein localises to the plastid. It is found in the chloroplast thylakoid lumen. This Arabidopsis thaliana (Mouse-ear cress) protein is Thylakoid lumenal 17.4 kDa protein, chloroplastic.